We begin with the raw amino-acid sequence, 199 residues long: FMN-dependent NADH:quinone oxidoreductase (199 aa).

Residues serine 9 and 95–98 (MYNF) contribute to the FMN site.

Belongs to the azoreductase type 1 family. Homodimer. FMN is required as a cofactor.

The catalysed reaction is 2 a quinone + NADH + H(+) = 2 a 1,4-benzosemiquinone + NAD(+). It carries out the reaction N,N-dimethyl-1,4-phenylenediamine + anthranilate + 2 NAD(+) = 2-(4-dimethylaminophenyl)diazenylbenzoate + 2 NADH + 2 H(+). Its function is as follows. Quinone reductase that provides resistance to thiol-specific stress caused by electrophilic quinones. In terms of biological role, also exhibits azoreductase activity. Catalyzes the reductive cleavage of the azo bond in aromatic azo compounds to the corresponding amines. This chain is FMN-dependent NADH:quinone oxidoreductase, found in Dechloromonas aromatica (strain RCB).